The sequence spans 632 residues: Chaperone protein HtpG (632 aa).

The tract at residues 1–343 is a; substrate-binding; that stretch reads MSEQTINNKE…SNDLALNVSR (343 aa). The segment at 344 to 560 is b; sequence EILQDNKVTQ…DFEMGTQMAK (217 aa). The segment at 561 to 632 is c; sequence LLEAAGQAAP…LSAMNQLLSK (72 aa).

It belongs to the heat shock protein 90 family. In terms of assembly, homodimer.

The protein resides in the cytoplasm. In terms of biological role, molecular chaperone. Has ATPase activity. The sequence is that of Chaperone protein HtpG from Aliivibrio salmonicida (strain LFI1238) (Vibrio salmonicida (strain LFI1238)).